Consider the following 292-residue polypeptide: Pantothenate synthetase (292 aa).

30–37 (MGALHEGH) is an ATP binding site. The active-site Proton donor is His-37. A (R)-pantoate-binding site is contributed by Gln-61. Beta-alanine is bound at residue Gln-61. ATP is bound at residue 147–150 (GEKD). Residue Gln-153 participates in (R)-pantoate binding. ATP is bound at residue 184-187 (VSSR).

This sequence belongs to the pantothenate synthetase family. As to quaternary structure, homodimer.

It localises to the cytoplasm. The catalysed reaction is (R)-pantoate + beta-alanine + ATP = (R)-pantothenate + AMP + diphosphate + H(+). It participates in cofactor biosynthesis; (R)-pantothenate biosynthesis; (R)-pantothenate from (R)-pantoate and beta-alanine: step 1/1. In terms of biological role, catalyzes the condensation of pantoate with beta-alanine in an ATP-dependent reaction via a pantoyl-adenylate intermediate. This is Pantothenate synthetase from Chlorobium phaeovibrioides (strain DSM 265 / 1930) (Prosthecochloris vibrioformis (strain DSM 265)).